Consider the following 2212-residue polypeptide: RNA-directed RNA polymerase L (2212 aa).

Residues 30–288 are endonuclease; sequence KDALLSQVHP…SHEENDSLDC (259 aa). Mn(2+) contacts are provided by glutamate 55, aspartate 93, and glutamate 106. Lysine 119 is an active-site residue. Residues 922–942 form a disordered region; it reads MKSSDAREERLQDPKRNEKNA. Positions 923-942 are enriched in basic and acidic residues; that stretch reads KSSDAREERLQDPKRNEKNA. Residues 1175–1371 form the RdRp catalytic domain; that stretch reads CDMKMAVNNG…YLSSKLNKFV (197 aa). Aspartate 1333 provides a ligand contact to Mg(2+).

This sequence belongs to the Bunyavirales RNA polymerase family. In terms of assembly, homomultimer; the oligomeric structure is essential for the polymerase activity. Interacts with nucleoprotein N. Interacts with protein Z; this interaction inhibits viral transcription and replication, Z partially blocks the product exit tunnel for the releasing nascent RNA product. It depends on Mn(2+) as a cofactor. Mg(2+) serves as cofactor.

Its subcellular location is the virion. It localises to the host cytoplasm. The enzyme catalyses RNA(n) + a ribonucleoside 5'-triphosphate = RNA(n+1) + diphosphate. Its function is as follows. RNA-dependent RNA polymerase, which is responsible for the replication and transcription of the viral RNA genome using antigenomic RNA as an intermediate. During transcription, synthesizes subgenomic RNAs and assures their capping by a cap-snatching mechanism, which involves the endonuclease activity cleaving the host capped pre-mRNAs. These short capped RNAs are then used as primers for viral transcription. The 3'-end of subgenomic mRNAs molecules are heterogeneous and not polyadenylated. The replicase function is to direct synthesis of antigenomic and genomic RNA which are encapsidated and non capped. As a consequence of the use of the same enzyme for both transcription and replication, these mechanisms need to be well coordinated. These processes may be regulated by proteins N and Z in a dose-dependent manner. Z protein inhibits the viral polymerase L und thus the viral transcription and RNA synthesis. The sequence is that of RNA-directed RNA polymerase L from Sabia mammarenavirus (isolate Human/Brasil/SPH114202/1990) (SABV).